Consider the following 445-residue polypeptide: Solute carrier family 52, riboflavin transporter, member 2 (445 aa).

Helical transmembrane passes span 14 to 34 (LLVA…WVEL), 47 to 67 (LPSY…VVTL), 86 to 106 (VLGM…APVA), 112 to 132 (VAFL…NVTF), 147 to 167 (FFLG…VQGV), and 196 to 216 (FFWA…GLLL). Positions 228 to 264 (ELGSGLQVGAPGAEEEVEESSPLQEPPSQAAGTTPGP) are disordered. The span at 247–258 (SSPLQEPPSQAA) shows a compositional bias: low complexity. Helical transmembrane passes span 277-297 (ACLL…LPAV), 312-332 (LAVV…MGVL), 339-359 (LGGL…LAVL), 366-386 (VGTS…LGVF), and 404-424 (ALLA…VAMF).

This sequence belongs to the riboflavin transporter family. Highly expressed in brain, fetal brain and salivary gland. Weakly expressed in other tissues.

The protein localises to the cell membrane. It carries out the reaction riboflavin(in) = riboflavin(out). Riboflavin transport is Na(+)-independent but moderately pH-sensitive. Activity is strongly inhibited by riboflavin analogs, such as lumiflavin. Weakly inhibited by flavin adenine dinucleotide (FAD) and flavin mononucleotide (FMN). Plasma membrane transporter mediating the uptake by cells of the water soluble vitamin B2/riboflavin that plays a key role in biochemical oxidation-reduction reactions of the carbohydrate, lipid, and amino acid metabolism. Humans are unable to synthesize vitamin B2/riboflavin and must obtain it via intestinal absorption. May also act as a receptor for 4-hydroxybutyrate. In terms of biological role, (Microbial infection) In case of infection by retroviruses, acts as a cell receptor to retroviral envelopes similar to the porcine endogenous retrovirus (PERV-A). This Homo sapiens (Human) protein is Solute carrier family 52, riboflavin transporter, member 2 (SLC52A2).